We begin with the raw amino-acid sequence, 65 residues long: Ferredoxin-1 (65 aa).

In terms of domain architecture, 4Fe-4S ferredoxin-type spans 2 to 30 (AMKIDPELCTSCGDCEPVCPTNAIAPKKG). [4Fe-4S] cluster contacts are provided by Cys-10, Cys-13, Cys-16, Cys-20, Cys-39, Cys-42, Cys-51, and Cys-55.

Requires [4Fe-4S] cluster as cofactor.

Ferredoxins are iron-sulfur proteins that transfer electrons in a wide variety of metabolic reactions. This ferredoxin probably participates in nitrogen fixation. The polypeptide is Ferredoxin-1 (fdxN) (Rhodobacter capsulatus (Rhodopseudomonas capsulata)).